The primary structure comprises 628 residues: DNA mismatch repair protein MutL (628 aa).

A disordered region spans residues 332–416; that stretch reads PTSAMPAPGN…ASTAPPLSEE (85 aa). Polar residues predominate over residues 375–396; the sequence is EGSSRSDVPYPSASQVTETTDS.

This sequence belongs to the DNA mismatch repair MutL/HexB family.

This protein is involved in the repair of mismatches in DNA. It is required for dam-dependent methyl-directed DNA mismatch repair. May act as a 'molecular matchmaker', a protein that promotes the formation of a stable complex between two or more DNA-binding proteins in an ATP-dependent manner without itself being part of a final effector complex. In Syntrophotalea carbinolica (strain DSM 2380 / NBRC 103641 / GraBd1) (Pelobacter carbinolicus), this protein is DNA mismatch repair protein MutL.